The primary structure comprises 411 residues: Anthranilate synthase component 1 (411 aa).

L-tryptophan is bound by residues Ser-27 and 203–205 (PYM). Position 237 to 238 (237 to 238 (GT)) interacts with chorismate. Residue Glu-262 participates in Mg(2+) binding. Residues Tyr-350, Arg-369, 382-384 (GAG), and Gly-384 each bind chorismate. Glu-397 serves as a coordination point for Mg(2+).

The protein belongs to the anthranilate synthase component I family. Heterotetramer consisting of two non-identical subunits: a beta subunit (TrpG) and a large alpha subunit (TrpE). Requires Mg(2+) as cofactor.

The catalysed reaction is chorismate + L-glutamine = anthranilate + pyruvate + L-glutamate + H(+). Its pathway is amino-acid biosynthesis; L-tryptophan biosynthesis; L-tryptophan from chorismate: step 1/5. With respect to regulation, feedback inhibited by tryptophan. Its function is as follows. Part of a heterotetrameric complex that catalyzes the two-step biosynthesis of anthranilate, an intermediate in the biosynthesis of L-tryptophan. In the first step, the glutamine-binding beta subunit (TrpG) of anthranilate synthase (AS) provides the glutamine amidotransferase activity which generates ammonia as a substrate that, along with chorismate, is used in the second step, catalyzed by the large alpha subunit of AS (TrpE) to produce anthranilate. In the absence of TrpG, TrpE can synthesize anthranilate directly from chorismate and high concentrations of ammonia. The chain is Anthranilate synthase component 1 (trpE) from Archaeoglobus fulgidus (strain ATCC 49558 / DSM 4304 / JCM 9628 / NBRC 100126 / VC-16).